Consider the following 559-residue polypeptide: Phenylalanine--tRNA ligase beta subunit (559 aa).

The B5 domain maps to 274–350; it reads FEPKIIDVHT…LGYGFNELPA (77 aa). Mg(2+)-binding residues include aspartate 328, aspartate 334, glutamate 337, and asparagine 338.

This sequence belongs to the phenylalanyl-tRNA synthetase beta subunit family. Type 2 subfamily. Tetramer of two alpha and two beta subunits. It depends on Mg(2+) as a cofactor.

Its subcellular location is the cytoplasm. It catalyses the reaction tRNA(Phe) + L-phenylalanine + ATP = L-phenylalanyl-tRNA(Phe) + AMP + diphosphate + H(+). In Methanosphaera stadtmanae (strain ATCC 43021 / DSM 3091 / JCM 11832 / MCB-3), this protein is Phenylalanine--tRNA ligase beta subunit.